The sequence spans 173 residues: Small ribosomal subunit protein mS25 (173 aa).

It belongs to the mitochondrion-specific ribosomal protein mS25 family. Component of the mitochondrial small ribosomal subunit (mt-SSU). Mature mammalian 55S mitochondrial ribosomes consist of a small (28S) and a large (39S) subunit. The 28S small subunit contains a 12S ribosomal RNA (12S mt-rRNA) and 30 different proteins. The 39S large subunit contains a 16S rRNA (16S mt-rRNA), a copy of mitochondrial valine transfer RNA (mt-tRNA(Val)), which plays an integral structural role, and 52 different proteins.

The protein localises to the mitochondrion. The polypeptide is Small ribosomal subunit protein mS25 (MRPS25) (Homo sapiens (Human)).